We begin with the raw amino-acid sequence, 372 residues long: 4-hydroxy-3-methylbut-2-en-1-yl diphosphate synthase (flavodoxin) (372 aa).

[4Fe-4S] cluster is bound by residues Cys270, Cys273, Cys305, and Glu312.

It belongs to the IspG family. [4Fe-4S] cluster serves as cofactor.

It catalyses the reaction (2E)-4-hydroxy-3-methylbut-2-enyl diphosphate + oxidized [flavodoxin] + H2O + 2 H(+) = 2-C-methyl-D-erythritol 2,4-cyclic diphosphate + reduced [flavodoxin]. It participates in isoprenoid biosynthesis; isopentenyl diphosphate biosynthesis via DXP pathway; isopentenyl diphosphate from 1-deoxy-D-xylulose 5-phosphate: step 5/6. Functionally, converts 2C-methyl-D-erythritol 2,4-cyclodiphosphate (ME-2,4cPP) into 1-hydroxy-2-methyl-2-(E)-butenyl 4-diphosphate. The sequence is that of 4-hydroxy-3-methylbut-2-en-1-yl diphosphate synthase (flavodoxin) from Salmonella gallinarum (strain 287/91 / NCTC 13346).